The chain runs to 363 residues: Serpentine receptor class T-55 (363 aa).

The first 18 residues, 1–18, serve as a signal peptide directing secretion; that stretch reads MKLRHFLIFLMLIPISSS. The next 7 membrane-spanning stretches (helical) occupy residues 70–90, 107–127, 143–163, 187–207, 231–251, 278–298, and 303–323; these read IYYI…IWVF, VFIG…PGFV, IVGK…AFLG, WLTV…TVLF, FLYF…ACLC, ICIS…FVLP, and FFHV…IMYI.

Belongs to the nematode receptor-like protein srt family.

The protein localises to the membrane. This Caenorhabditis elegans protein is Serpentine receptor class T-55 (srt-55).